The chain runs to 460 residues: Bifunctional protein GlmU (460 aa).

The segment at 1–228 (MKNYALVLAA…NSLAMGVNDL (228 aa)) is pyrophosphorylase. UDP-N-acetyl-alpha-D-glucosamine-binding positions include 8–11 (LAAG), lysine 22, glutamine 72, and 77–78 (GT). A Mg(2+)-binding site is contributed by aspartate 102. Positions 139, 154, 169, and 226 each coordinate UDP-N-acetyl-alpha-D-glucosamine. Asparagine 226 is a binding site for Mg(2+). Residues 229–249 (YAISKAEKYLREYINKDHMLN) are linker. An N-acetyltransferase region spans residues 250–460 (GVSMINPETI…LISPKPKKEE (211 aa)). 2 residues coordinate UDP-N-acetyl-alpha-D-glucosamine: arginine 331 and lysine 349. The active-site Proton acceptor is the histidine 361. 2 residues coordinate UDP-N-acetyl-alpha-D-glucosamine: tyrosine 364 and asparagine 375. Acetyl-CoA is bound by residues 384 to 385 (NY), alanine 421, and arginine 438.

This sequence in the N-terminal section; belongs to the N-acetylglucosamine-1-phosphate uridyltransferase family. It in the C-terminal section; belongs to the transferase hexapeptide repeat family. In terms of assembly, homotrimer. The cofactor is Mg(2+).

It is found in the cytoplasm. The enzyme catalyses alpha-D-glucosamine 1-phosphate + acetyl-CoA = N-acetyl-alpha-D-glucosamine 1-phosphate + CoA + H(+). It carries out the reaction N-acetyl-alpha-D-glucosamine 1-phosphate + UTP + H(+) = UDP-N-acetyl-alpha-D-glucosamine + diphosphate. It participates in nucleotide-sugar biosynthesis; UDP-N-acetyl-alpha-D-glucosamine biosynthesis; N-acetyl-alpha-D-glucosamine 1-phosphate from alpha-D-glucosamine 6-phosphate (route II): step 2/2. It functions in the pathway nucleotide-sugar biosynthesis; UDP-N-acetyl-alpha-D-glucosamine biosynthesis; UDP-N-acetyl-alpha-D-glucosamine from N-acetyl-alpha-D-glucosamine 1-phosphate: step 1/1. Its pathway is bacterial outer membrane biogenesis; LPS lipid A biosynthesis. Functionally, catalyzes the last two sequential reactions in the de novo biosynthetic pathway for UDP-N-acetylglucosamine (UDP-GlcNAc). The C-terminal domain catalyzes the transfer of acetyl group from acetyl coenzyme A to glucosamine-1-phosphate (GlcN-1-P) to produce N-acetylglucosamine-1-phosphate (GlcNAc-1-P), which is converted into UDP-GlcNAc by the transfer of uridine 5-monophosphate (from uridine 5-triphosphate), a reaction catalyzed by the N-terminal domain. The protein is Bifunctional protein GlmU of Acholeplasma laidlawii (strain PG-8A).